A 376-amino-acid chain; its full sequence is Cobalt-precorrin-5B C(1)-methyltransferase (376 aa).

A disordered region spans residues 353-376; that stretch reads KGRTTSTPSHQPAPSSFGDRNRRT. Residues 355–366 are compositionally biased toward polar residues; that stretch reads RTTSTPSHQPAP.

The protein belongs to the CbiD family.

The catalysed reaction is Co-precorrin-5B + S-adenosyl-L-methionine = Co-precorrin-6A + S-adenosyl-L-homocysteine. Its pathway is cofactor biosynthesis; adenosylcobalamin biosynthesis; cob(II)yrinate a,c-diamide from sirohydrochlorin (anaerobic route): step 6/10. Catalyzes the methylation of C-1 in cobalt-precorrin-5B to form cobalt-precorrin-6A. This Agrobacterium fabrum (strain C58 / ATCC 33970) (Agrobacterium tumefaciens (strain C58)) protein is Cobalt-precorrin-5B C(1)-methyltransferase.